Reading from the N-terminus, the 192-residue chain is 4'-phosphopantetheinyl transferase AcpT (192 aa).

The protein belongs to the P-Pant transferase superfamily. Gsp/Sfp/HetI/AcpT family.

The enzyme catalyses apo-[ACP] + CoA = holo-[ACP] + adenosine 3',5'-bisphosphate + H(+). In terms of biological role, may be involved in an alternative pathway for phosphopantetheinyl transfer and holo-ACP synthesis. The native apo-protein substrate is unknown. The polypeptide is 4'-phosphopantetheinyl transferase AcpT (acpT) (Salmonella typhi).